The primary structure comprises 432 residues: Glutamate-1-semialdehyde 2,1-aminomutase 2 (432 aa).

K268 bears the N6-(pyridoxal phosphate)lysine mark.

This sequence belongs to the class-III pyridoxal-phosphate-dependent aminotransferase family. HemL subfamily. In terms of assembly, homodimer. The cofactor is pyridoxal 5'-phosphate.

It is found in the cytoplasm. It catalyses the reaction (S)-4-amino-5-oxopentanoate = 5-aminolevulinate. The protein operates within porphyrin-containing compound metabolism; protoporphyrin-IX biosynthesis; 5-aminolevulinate from L-glutamyl-tRNA(Glu): step 2/2. The sequence is that of Glutamate-1-semialdehyde 2,1-aminomutase 2 from Listeria innocua serovar 6a (strain ATCC BAA-680 / CLIP 11262).